Here is a 500-residue protein sequence, read N- to C-terminus: Cytochrome P450 71B26 (500 aa).

Residues 1 to 21 (MDSIWILSLLFFIIFLLLAAF) traverse the membrane as a helical segment. Position 440 (C440) interacts with heme.

It belongs to the cytochrome P450 family. The cofactor is heme.

It is found in the membrane. This Arabidopsis thaliana (Mouse-ear cress) protein is Cytochrome P450 71B26 (CYP71B26).